The primary structure comprises 116 residues: Ribosome-binding factor A (116 aa).

Belongs to the RbfA family. As to quaternary structure, monomer. Binds 30S ribosomal subunits, but not 50S ribosomal subunits or 70S ribosomes.

The protein localises to the cytoplasm. Its function is as follows. One of several proteins that assist in the late maturation steps of the functional core of the 30S ribosomal subunit. Associates with free 30S ribosomal subunits (but not with 30S subunits that are part of 70S ribosomes or polysomes). Required for efficient processing of 16S rRNA. May interact with the 5'-terminal helix region of 16S rRNA. The chain is Ribosome-binding factor A from Enterococcus faecalis (strain ATCC 700802 / V583).